The sequence spans 204 residues: Dihydroorotase (204 aa).

His-34 is a binding site for Zn(2+). Leu-79 contributes to the substrate binding site. Asp-107 lines the Zn(2+) pocket. Asp-107 is an active-site residue. 2 residues coordinate substrate: His-111 and Ala-123.

It belongs to the metallo-dependent hydrolases superfamily. DHOase family. Class II DHOase subfamily. In terms of assembly, homodimer. It depends on Zn(2+) as a cofactor.

It carries out the reaction (S)-dihydroorotate + H2O = N-carbamoyl-L-aspartate + H(+). Its pathway is pyrimidine metabolism; UMP biosynthesis via de novo pathway; (S)-dihydroorotate from bicarbonate: step 3/3. Catalyzes the reversible cyclization of carbamoyl aspartate to dihydroorotate. The chain is Dihydroorotase from Serratia marcescens.